A 415-amino-acid polypeptide reads, in one-letter code: DNA primase DnaG (415 aa).

In terms of domain architecture, Toprim spans 171–250 (DAIIIVEGRA…AFSPRGKSVE (80 aa)). Positions 177, 219, and 221 each coordinate Mg(2+). The segment at 280–323 (ELPGDLGGRPARTAPAHDEGGNSDTTGKQAVSQKRIRDGTSKVP) is disordered. Over residues 301 to 311 (NSDTTGKQAVS) the composition is skewed to polar residues.

The protein belongs to the archaeal DnaG primase family. As to quaternary structure, forms a ternary complex with MCM helicase and DNA. It depends on Mg(2+) as a cofactor.

The catalysed reaction is ssDNA + n NTP = ssDNA/pppN(pN)n-1 hybrid + (n-1) diphosphate.. RNA polymerase that catalyzes the synthesis of short RNA molecules used as primers for DNA polymerase during DNA replication. The sequence is that of DNA primase DnaG from Methanoregula boonei (strain DSM 21154 / JCM 14090 / 6A8).